Here is an 850-residue protein sequence, read N- to C-terminus: Protein SEY1 (850 aa).

The segment at 1 to 27 (MSDLPPPDLGSEEISVSPTSSSSSFVP) is disordered. Residues 1-741 (MSDLPPPDLG…KRALIQHVTH (741 aa)) lie on the Cytoplasmic side of the membrane. Positions 12 to 27 (EEISVSPTSSSSSFVP) are enriched in low complexity. Positions 64 to 297 (NNNYHIVSVF…NEDFLFKKYY (234 aa)) constitute a GB1/RHD3-type G domain. GTP is bound at residue 74–81 (GSQSTGKS). Residues 742 to 762 (IPYYIYIVILVLGWNEFMAVL) traverse the membrane as a helical segment. Residues 763 to 765 (RNP) are Lumenal-facing. The chain crosses the membrane as a helical span at residues 766-786 (FFFTLLLMLGAGTYVLYHLNL). Residues 787–850 (LKPAMVVVQR…SDLTPPGEGS (64 aa)) lie on the Cytoplasmic side of the membrane. A disordered region spans residues 816–850 (QPQEHAKRLSKMAGITEDKPEEIEMSDLTPPGEGS).

It belongs to the TRAFAC class dynamin-like GTPase superfamily. GB1/RHD3 GTPase family. RHD3 subfamily.

The protein localises to the endoplasmic reticulum membrane. Cooperates with the reticulon proteins and tubule-shaping DP1 family proteins to generate and maintain the structure of the tubular endoplasmic reticulum network. Has GTPase activity, which is required for its function in ER organization. This Meyerozyma guilliermondii (strain ATCC 6260 / CBS 566 / DSM 6381 / JCM 1539 / NBRC 10279 / NRRL Y-324) (Yeast) protein is Protein SEY1.